A 341-amino-acid chain; its full sequence is GDP-mannose transporter GONST5 (341 aa).

8 helical membrane passes run 17-37 (LSIL…KWIF), 44-64 (FPLS…YIVI), 89-109 (FVFC…PVSF), 141-161 (LVPI…FNVF), 192-212 (INTV…PAFL), 233-253 (IILF…FYVI), 260-280 (TFNV…WMIF), and 284-304 (ISPM…FYGY). Residues 33–152 (NKWIFQKLDF…PIVGGILLTS (120 aa)) form the EamA domain.

The protein belongs to the TPT transporter family. TPT (TC 2.A.7.9) subfamily. As to expression, expressed in rosette leaves, flowers and siliques.

The protein localises to the golgi apparatus membrane. Functionally, GDP-mannose transporter that may be involved in the import of GDP-mannose from the cytoplasm into the Golgi lumen. This chain is GDP-mannose transporter GONST5 (GONST5), found in Arabidopsis thaliana (Mouse-ear cress).